A 614-amino-acid chain; its full sequence is DNA repair protein rad26 (614 aa).

A compositionally biased stretch (low complexity) spans 29–43; it reads QAQTQVQAQSSQVVV. Disordered regions lie at residues 29–76 and 157–214; these read QAQT…QASL and KKMK…TAED. Composition is skewed to polar residues over residues 50–76 and 181–190; these read QNLNLPNSYTNSSQKVRESTVNSQASL and LLSSSDQLAK. The span at 191–207 shows a compositional bias: basic residues; it reads STKHAAKNSPSKKKRKT.

As to quaternary structure, interacts with cds1.

It is found in the nucleus. Its function is as follows. Involved in cell cycle arrest when DNA synthesis is inhibited by hydroxyurea, and in mitosis arrest after treatment with DNA-damaging agents. This protein is S phase-specific. The polypeptide is DNA repair protein rad26 (rad26) (Schizosaccharomyces pombe (strain 972 / ATCC 24843) (Fission yeast)).